The following is a 416-amino-acid chain: Gamma-glutamyl phosphate reductase (416 aa).

The protein belongs to the gamma-glutamyl phosphate reductase family.

Its subcellular location is the cytoplasm. The enzyme catalyses L-glutamate 5-semialdehyde + phosphate + NADP(+) = L-glutamyl 5-phosphate + NADPH + H(+). It participates in amino-acid biosynthesis; L-proline biosynthesis; L-glutamate 5-semialdehyde from L-glutamate: step 2/2. Functionally, catalyzes the NADPH-dependent reduction of L-glutamate 5-phosphate into L-glutamate 5-semialdehyde and phosphate. The product spontaneously undergoes cyclization to form 1-pyrroline-5-carboxylate. The polypeptide is Gamma-glutamyl phosphate reductase (Salmonella arizonae (strain ATCC BAA-731 / CDC346-86 / RSK2980)).